The following is a 570-amino-acid chain: Dwarfin sma-4 (570 aa).

Residues 115-134 (SSQASSQPPPTPTVNPTPIP) form a disordered region. The span at 121–134 (QPPPTPTVNPTPIP) shows a compositional bias: pro residues. Residues 150–273 (QISHVLQCYQ…YERVVSNRIT (124 aa)) enclose the MH1 domain. Zn(2+) contacts are provided by cysteine 203, cysteine 247, cysteine 258, and histidine 263. The 221-residue stretch at 350–570 (WCSIIYYELD…LKNSSQFGSS (221 aa)) folds into the MH2 domain.

This sequence belongs to the dwarfin/SMAD family.

It is found in the cytoplasm. The protein resides in the nucleus. Involved in TGF-beta pathway. In Caenorhabditis elegans, this protein is Dwarfin sma-4 (sma-4).